The following is a 724-amino-acid chain: Protein-glutamine gamma-glutamyltransferase 5 (724 aa).

Alanine 2 is modified (N-acetylalanine). Residues cysteine 283, histidine 342, and aspartate 365 contribute to the active site. Residues asparagine 405, aspartate 407, glutamate 453, and glutamate 458 each coordinate Ca(2+). Composition is skewed to polar residues over residues 473–486 (RSQG…NPFS) and 495–505 (ARSPDSPSLQP). The segment at 473–505 (RSQGPHQANSNPFSSVPPRHNSARSPDSPSLQP) is disordered.

This sequence belongs to the transglutaminase superfamily. Transglutaminase family. Ca(2+) is required as a cofactor.

The protein localises to the cytoplasm. The enzyme catalyses L-glutaminyl-[protein] + L-lysyl-[protein] = [protein]-L-lysyl-N(6)-5-L-glutamyl-[protein] + NH4(+). Its function is as follows. Catalyzes the cross-linking of proteins and the conjugation of polyamines to proteins. Contributes to the formation of the cornified cell envelope of keratinocytes. This chain is Protein-glutamine gamma-glutamyltransferase 5 (Tgm5), found in Mus musculus (Mouse).